We begin with the raw amino-acid sequence, 188 residues long: Biogenesis of lysosome-related organelles complex 1 subunit 5 (188 aa).

The interval 1 to 24 (MSSSSSSSSPVKSTGSPFIQSLKP) is disordered. Residues 10 to 19 (PVKSTGSPFI) show a composition bias toward polar residues. Positions 101 to 183 (MQDQLASVLK…QYVTMDKELS (83 aa)) form a coiled coil.

This sequence belongs to the BLOC1S5 family. As to quaternary structure, component of the biogenesis of lysosome-related organelles complex 1 (BLOC-1).

Functionally, component of the BLOC-1 complex, a complex that is required for normal biogenesis of lysosome-related organelles (LRO), such as platelet dense granules and melanosomes. Plays a role in intracellular vesicle trafficking. The chain is Biogenesis of lysosome-related organelles complex 1 subunit 5 (bloc1s5) from Xenopus laevis (African clawed frog).